Here is a 525-residue protein sequence, read N- to C-terminus: Exoglucanase 1 (525 aa).

An N-terminal signal peptide occupies residues 1-18 (MRTAKFATLAALVASAAA). The catalytic stretch occupies residues 19 to 467 (QQACSLTTER…AGNGGNNGGN (449 aa)). Glu231 functions as the Nucleophile in the catalytic mechanism. Catalysis depends on Glu236, which acts as the Proton donor. Asn289 is a glycosylation site (N-linked (GlcNAc...) asparagine). Residues 454–492 (GLPGAGNGGNNGGNPPPPTTTTSSAPATTTTASAGPKAG) are disordered. Gly residues predominate over residues 456–465 (PGAGNGGNNG). The interval 468–489 (PPPPTTTTSSAPATTTTASAGP) is linker. Positions 473 to 489 (TTTSSAPATTTTASAGP) are enriched in low complexity. Residues 489 to 525 (PKAGRWQQCGGIGFTGPTQCEEPYICTKLNDWYSQCL) enclose the CBM1 domain. 2 disulfides stabilise this stretch: Cys497–Cys514 and Cys508–Cys524.

Belongs to the glycosyl hydrolase 7 (cellulase C) family.

It carries out the reaction Hydrolysis of (1-&gt;4)-beta-D-glucosidic linkages in cellulose and cellotetraose, releasing cellobiose from the non-reducing ends of the chains.. Functionally, the biological conversion of cellulose to glucose generally requires three types of hydrolytic enzymes: (1) Endoglucanases which cut internal beta-1,4-glucosidic bonds; (2) Exocellobiohydrolases that cut the disaccharide cellobiose from the non-reducing end of the cellulose polymer chain; (3) Beta-1,4-glucosidases which hydrolyze the cellobiose and other short cello-oligosaccharides to glucose. The polypeptide is Exoglucanase 1 (CBH-1) (Humicola insolens (Soft-rot fungus)).